Consider the following 152-residue polypeptide: SsrA-binding protein (152 aa).

The protein belongs to the SmpB family.

Its subcellular location is the cytoplasm. Required for rescue of stalled ribosomes mediated by trans-translation. Binds to transfer-messenger RNA (tmRNA), required for stable association of tmRNA with ribosomes. tmRNA and SmpB together mimic tRNA shape, replacing the anticodon stem-loop with SmpB. tmRNA is encoded by the ssrA gene; the 2 termini fold to resemble tRNA(Ala) and it encodes a 'tag peptide', a short internal open reading frame. During trans-translation Ala-aminoacylated tmRNA acts like a tRNA, entering the A-site of stalled ribosomes, displacing the stalled mRNA. The ribosome then switches to translate the ORF on the tmRNA; the nascent peptide is terminated with the 'tag peptide' encoded by the tmRNA and targeted for degradation. The ribosome is freed to recommence translation, which seems to be the essential function of trans-translation. The chain is SsrA-binding protein from Rickettsia peacockii (strain Rustic).